The primary structure comprises 194 residues: Mpv17-like protein (194 aa).

At 1-14 the chain is on the cytoplasmic side; that stretch reads MASWWRAFPQAARR. A helical membrane pass occupies residues 15 to 34; it reads YPWPTNVLLYAGLFSAGDAL. The tract at residues 16 to 55 is targeting to peroxisomes; sequence PWPTNVLLYAGLFSAGDALQQRLRGGPADWRQTRRVATLA. Over 35–50 the chain is Lumenal; sequence QQRLRGGPADWRQTRR. A helical membrane pass occupies residues 51–67; it reads VATLAVTFHGNFNYVWL. The Cytoplasmic portion of the chain corresponds to 68 to 91; that stretch reads RLLERALPGRAPRTVLAKVLCDQT. The helical transmembrane segment at 92–110 threads the bilayer; that stretch reads VGGPIALSAFYVGMSVLQG. The Lumenal segment spans residues 111–150; sequence KDDIFLDLKQKFWNTYKSGLMYWPFVQLTNFSLVPVHWRT. The chain crosses the membrane as a helical span at residues 151-168; the sequence is AYTGLCAFLWATFLCFSQ. The Cytoplasmic segment spans residues 169–194; the sequence is QSGDGTLQSIFIFLRRKEASDKSPEK.

Belongs to the peroxisomal membrane protein PXMP2/4 family. In terms of tissue distribution, isoform 1 and isoform 3 are expressed in the kidney (at protein level). Isoform 1 is expressed in the kidney, spleen, heart, brain, lung and liver. Isoform 3 is expressed in the kidney. Isoform 1 and isoform 3 expression increase during development, reache their highest level in adulthood and decrease with aging.

It localises to the peroxisome membrane. The protein resides in the cytoplasm. Its function is as follows. Participates in reactive oxygen species metabolism by up- or down-regulation of the genes of antioxidant enzymes. Protective against the mitochondrial apoptotic cascade. In terms of biological role, participates in reactive oxygen species metabolism by up- or down-regulation of the genes of antioxidant enzymes. The sequence is that of Mpv17-like protein (Mpv17l) from Mus musculus (Mouse).